Reading from the N-terminus, the 212-residue chain is Large ribosomal subunit protein uL3 (212 aa).

A compositionally biased stretch (polar residues) spans 135-155 (ATHGNSVSHRAHGSTGQNQSP). The segment at 135-162 (ATHGNSVSHRAHGSTGQNQSPGKVFKGK) is disordered. Position 153 is an N5-methylglutamine (Gln-153).

This sequence belongs to the universal ribosomal protein uL3 family. In terms of assembly, part of the 50S ribosomal subunit. Forms a cluster with proteins L14 and L19. In terms of processing, methylated by PrmB.

Functionally, one of the primary rRNA binding proteins, it binds directly near the 3'-end of the 23S rRNA, where it nucleates assembly of the 50S subunit. In Psychrobacter arcticus (strain DSM 17307 / VKM B-2377 / 273-4), this protein is Large ribosomal subunit protein uL3.